The sequence spans 255 residues: Reaction center protein L chain (255 aa).

3 helical membrane passes run Gly12–Leu35, Gly64–Gly92, and Leu95–Gly120. (7R,8Z)-bacteriochlorophyll b is bound by residues His133 and His153. The helical transmembrane segment at Asn150–Asn179 threads the bilayer. His170 provides a ligand contact to Fe cation. An a ubiquinone-binding site is contributed by Phe196. A helical membrane pass occupies residues Gly205–Ser231. His210 contacts Fe cation.

It belongs to the reaction center PufL/M/PsbA/D family. Reaction center is composed of four bacteriochlorophylls, two bacteriopheophytins, two ubiquinones, one iron, and three highly hydrophobic polypeptide chains (designated L, M, and H).

It localises to the cellular chromatophore membrane. Its function is as follows. The reaction center is a membrane-bound complex that mediates the initial photochemical event in the electron transfer process of photosynthesis. The chain is Reaction center protein L chain (pufL) from Pararhodospirillum photometricum (Rhodospirillum photometricum).